The chain runs to 193 residues: ER membrane protein complex subunit 4 (193 aa).

The next 2 helical transmembrane spans lie at 91–111 (ILAYMSGNSLQIFSIMTTLML) and 137–157 (LWPAMGAYILFQLLLMGIGVY).

The protein belongs to the EMC4 family.

It localises to the endoplasmic reticulum membrane. This is ER membrane protein complex subunit 4 from Schizosaccharomyces pombe (strain 972 / ATCC 24843) (Fission yeast).